Consider the following 369-residue polypeptide: MTQKTILNDTHRALGAKMVDFGGWDMPIHYGSQLDEHHQVRRDAGMFDVSHMTVVDLHGARVRAFLRDLLANSVDKLKVCGKALYTCMLNPQGGVIDDLIVYYMSEDFFRLVVNAATREKDLQWIGEQAVRFDVRVEERSDFAMIAVQGPNARANVIDLLDPADTAAASKLGRFAALQTRSRDGIELFLARTGYTGEDGFEIVLPQEAAVAFWNALLAQGVKPAGLGARDTLRLEAGMHLYGQDMDDAVTPYEAALAWTIALDEGRDFIGRRVLESQKAQGAPCQLIGVVMDDKGVLRHGQAVFTASGEGEILSGTFSPTLGKAIAFARVPAGSIDQLRVDIRGKQVPLRAVKFPFVRDGQAQPGVLGD.

The protein belongs to the GcvT family. As to quaternary structure, the glycine cleavage system is composed of four proteins: P, T, L and H.

The enzyme catalyses N(6)-[(R)-S(8)-aminomethyldihydrolipoyl]-L-lysyl-[protein] + (6S)-5,6,7,8-tetrahydrofolate = N(6)-[(R)-dihydrolipoyl]-L-lysyl-[protein] + (6R)-5,10-methylene-5,6,7,8-tetrahydrofolate + NH4(+). Functionally, the glycine cleavage system catalyzes the degradation of glycine. The chain is Aminomethyltransferase from Xanthomonas oryzae pv. oryzae (strain PXO99A).